Consider the following 2711-residue polypeptide: Chromodomain-helicase-DNA-binding protein 6 (2711 aa).

Basic and acidic residues-rich tracts occupy residues 1–12, 100–115, 122–151, and 158–171; these read MKMKIQKKEKQL, EPGE…DREP, EPKE…DGVK, and EASG…KRSC. 2 disordered regions span residues 1-52 and 66-243; these read MKMK…EEAA and EEAD…QVKR. A required for DNA-dependent ATPase activity region spans residues 1-746; that stretch reads MKMKIQKKEK…MMELRKCCNH (746 aa). Over residues 214–224 the composition is skewed to low complexity; that stretch reads SLPNPSLQSPE. Chromo domains follow at residues 291–342 and 374–438; these read NIIE…KDPR and IEID…KHVE. In terms of domain architecture, Helicase ATP-binding spans 472–646; it reads LFNWYNRKNC…FSLLNFLEPS (175 aa). An ATP-binding site is contributed by 485 to 492; it reads DEMGLGKT. The DEAH box motif lies at 597 to 600; it reads DEAH. The 170-residue stretch at 786 to 955 folds into the Helicase C-terminal domain; sequence LIDKLLPKLI…LSKMEVEDLL (170 aa). The disordered stretch occupies residues 1318–1389; that stretch reads SLSAEQGVTD…SDPDKSPWPV (72 aa). Polar residues predominate over residues 1320–1329; that stretch reads SAEQGVTDGT. A compositionally biased stretch (basic and acidic residues) spans 1332–1350; sequence IPERGNIDKEDSAEDKLDG. One can recognise a Myb-like domain in the interval 1448–1502; the sequence is RWTRREQADFYRTVSSFGVVYDQEKKAFDWTQFRIISRLDKKSDESLEHYFYSFV. Ser1865 bears the Phosphoserine mark. Disordered regions lie at residues 1951-1978, 1997-2059, 2124-2147, 2321-2350, 2373-2419, 2550-2602, and 2641-2711; these read SEDS…TVEG, EPWK…ASGI, LPTP…ATEH, TTLS…QAEK, GFGT…RGFL, SASL…ITTS, and RHSE…EDTN. Residues 2017–2036 are compositionally biased toward basic and acidic residues; that stretch reads SEPKPEDMDFENKDDYEKDG. Low complexity-rich tracts occupy residues 2130–2140 and 2333–2349; these read SSSAGSRSSLS and ATSS…SQAE. Over residues 2550–2563 the composition is skewed to low complexity; it reads SASLASTKSGTSAT. Positions 2565–2586 are enriched in basic and acidic residues; the sequence is KSTEDKLSGHDVNTDALVDDKP. Composition is skewed to polar residues over residues 2591-2602 and 2677-2688; these read FSDQSEPTITTS and SDQNCTESSATV. Over residues 2690–2711 the composition is skewed to basic and acidic residues; sequence PEREHVAQAREEGLKDSNEDTN.

It belongs to the SNF2/RAD54 helicase family. In terms of assembly, interacts with NFE2L2; involved in activation of the transcription. Widely expressed.

Its subcellular location is the nucleus. The protein resides in the nucleoplasm. The enzyme catalyses ATP + H2O = ADP + phosphate + H(+). ATP-dependent chromatin-remodeling factor. Regulates transcription by disrupting nucleosomes in a largely non-sliding manner which strongly increases the accessibility of chromatin. Activates transcription of specific genes in response to oxidative stress through interaction with NFE2L2. The chain is Chromodomain-helicase-DNA-binding protein 6 (Chd6) from Mus musculus (Mouse).